The chain runs to 432 residues: UDP-N-acetylmuramate--L-alanine ligase (432 aa).

108 to 114 (GAHGKTS) is an ATP binding site.

The protein belongs to the MurCDEF family.

It localises to the cytoplasm. It catalyses the reaction UDP-N-acetyl-alpha-D-muramate + L-alanine + ATP = UDP-N-acetyl-alpha-D-muramoyl-L-alanine + ADP + phosphate + H(+). It functions in the pathway cell wall biogenesis; peptidoglycan biosynthesis. Functionally, cell wall formation. This is UDP-N-acetylmuramate--L-alanine ligase from Bacillus licheniformis (strain ATCC 14580 / DSM 13 / JCM 2505 / CCUG 7422 / NBRC 12200 / NCIMB 9375 / NCTC 10341 / NRRL NRS-1264 / Gibson 46).